The following is a 352-amino-acid chain: Rhodopsin (352 aa).

Over 1-36 (MNGTEGPYFYVPMSNATGVVRSPYEYPQYYLAPPWA) the chain is Extracellular. N-linked (GlcNAc...) asparagine glycans are attached at residues Asn2 and Asn15. The chain crosses the membrane as a helical span at residues 37–61 (YACLAAYMFFLILVGFPVNFLTLYV). Topologically, residues 62 to 73 (TIEHKKLRTPLN) are cytoplasmic. Residues 74-96 (YILLNLAVADLFMVFGGFTTTMY) form a helical membrane-spanning segment. The Extracellular portion of the chain corresponds to 97–110 (TSLNGYFVFGRLGC). A disulfide bridge links Cys110 with Cys187. A helical membrane pass occupies residues 111-133 (NLEGFFATFGGINSLWCLVVLSI). Positions 134 to 136 (ERW) match the 'Ionic lock' involved in activated form stabilization motif. Residues 134–152 (ERWVVVCKPMSNFRFGENH) lie on the Cytoplasmic side of the membrane. A helical membrane pass occupies residues 153 to 173 (AIMGVAFTWFMALACTVPPLV). Residues 174–202 (GWSRYIPEGMQCSCGIDYYTRAEGFNNES) lie on the Extracellular side of the membrane. A helical membrane pass occupies residues 203–224 (FVIYMFVVHFLTPLFVITFCYG). The Cytoplasmic portion of the chain corresponds to 225 to 252 (RLVCTVKEAAAQQQESETTQRAEREVTR). Residues 253–274 (MVILMFIAYLVCWLPYASVSWW) form a helical membrane-spanning segment. Topologically, residues 275–286 (IFTNQGSEFGPI) are extracellular. A helical membrane pass occupies residues 287–308 (FMTVPAFFAKSSSIYNPVIYIC). Lys296 bears the N6-(retinylidene)lysine mark. Residues 309-352 (LNKQFRHCMITTLCCGKNPFEEEEGASTTASKTEASSVSSVSPA) are Cytoplasmic-facing. Residues Cys322 and Cys323 are each lipidated (S-palmitoyl cysteine). A disordered region spans residues 331 to 352 (EEGASTTASKTEASSVSSVSPA). Over residues 334 to 352 (ASTTASKTEASSVSSVSPA) the composition is skewed to low complexity.

It belongs to the G-protein coupled receptor 1 family. Opsin subfamily. Phosphorylated on some or all of the serine and threonine residues present in the C-terminal region. In terms of processing, contains one covalently linked retinal chromophore.

It localises to the membrane. The protein resides in the cell projection. The protein localises to the cilium. Its subcellular location is the photoreceptor outer segment. In terms of biological role, photoreceptor required for image-forming vision at low light intensity. While most salt water fish species use retinal as chromophore, most freshwater fish use 3-dehydroretinal, or a mixture of retinal and 3-dehydroretinal. Light-induced isomerization of 11-cis to all-trans retinal triggers a conformational change that activates signaling via G-proteins. Subsequent receptor phosphorylation mediates displacement of the bound G-protein alpha subunit by arrestin and terminates signaling. This Psalidodon fasciatus (Banded astyanax) protein is Rhodopsin (rho).